The primary structure comprises 501 residues: Aldehyde dehydrogenase 1A1 (501 aa).

At Ser2 the chain carries N-acetylserine. An N6-acetyllysine mark is found at Lys91 and Lys128. Residues 167–170 (IPWN), 193–196 (KPAE), 226–227 (GP), and 246–247 (GS) contribute to the NAD(+) site. The residue at position 252 (Lys252) is an N6-acetyllysine. Glu269 (proton acceptor) is an active-site residue. Residue 269–271 (ELG) participates in NAD(+) binding. Cys303 acts as the Nucleophile in catalysis. Residues 336–501 (LTPGINQGPQ…VAMKISQKNS (166 aa)) form a mediates interaction with PRMT3 region. Thr337 bears the Phosphothreonine mark. An NAD(+)-binding site is contributed by 349-353 (EQHDK). 2 positions are modified to N6-acetyllysine: Lys353 and Lys367. 400-402 (EIF) contributes to the NAD(+) binding site. Lys410 carries the post-translational modification N6-acetyllysine. Residue Ser413 is modified to Phosphoserine. N6-acetyllysine is present on residues Lys419, Lys435, and Lys495.

The protein belongs to the aldehyde dehydrogenase family. Homotetramer. Interacts with PRMT3; the interaction is direct, inhibits ALDH1A1 aldehyde dehydrogenase activity and is independent of the methyltransferase activity of PRMT3. Post-translationally, the N-terminus is blocked most probably by acetylation. In terms of tissue distribution, expressed in retina. Expressed in lens and cornea (at protein level). Expressed by midbrain dopamine neurons.

It localises to the cytoplasm. The protein resides in the cytosol. It is found in the cell projection. Its subcellular location is the axon. It carries out the reaction an aldehyde + NAD(+) + H2O = a carboxylate + NADH + 2 H(+). The catalysed reaction is all-trans-retinal + NAD(+) + H2O = all-trans-retinoate + NADH + 2 H(+). It catalyses the reaction 9-cis-retinal + NAD(+) + H2O = 9-cis-retinoate + NADH + 2 H(+). The enzyme catalyses 11-cis-retinal + NAD(+) + H2O = 11-cis-retinoate + NADH + 2 H(+). It carries out the reaction 13-cis-retinal + NAD(+) + H2O = 13-cis-retinoate + NADH + 2 H(+). The catalysed reaction is 4-aminobutanal + NAD(+) + H2O = 4-aminobutanoate + NADH + 2 H(+). It catalyses the reaction 3-deoxyglucosone + NAD(+) + H2O = 2-dehydro-3-deoxy-D-gluconate + NADH + 2 H(+). The enzyme catalyses (E)-4-hydroxynon-2-enal + NAD(+) + H2O = (E)-4-hydroxynon-2-enoate + NADH + 2 H(+). It carries out the reaction malonaldehyde + NAD(+) + H2O = 3-oxopropanoate + NADH + 2 H(+). The catalysed reaction is hexanal + NAD(+) + H2O = hexanoate + NADH + 2 H(+). It catalyses the reaction propanal + NAD(+) + H2O = propanoate + NADH + 2 H(+). The enzyme catalyses acetaldehyde + NAD(+) + H2O = acetate + NADH + 2 H(+). It carries out the reaction benzaldehyde + NAD(+) + H2O = benzoate + NADH + 2 H(+). Its pathway is cofactor metabolism; retinol metabolism. With respect to regulation, the aminobutyraldehyde dehydrogenase activity is negatively regulated by ethanol in vivo. In terms of biological role, cytosolic dehydrogenase that catalyzes the irreversible oxidation of a wide range of aldehydes to their corresponding carboxylic acid. Functions downstream of retinol dehydrogenases and catalyzes the oxidation of retinaldehyde into retinoic acid, the second step in the oxidation of retinol/vitamin A into retinoic acid. This pathway is crucial to control the levels of retinol and retinoic acid, two important molecules which excess can be teratogenic and cytotoxic. Also oxidizes aldehydes resulting from lipid peroxidation like (E)-4-hydroxynon-2-enal/HNE, malonaldehyde and hexanal that form protein adducts and are highly cytotoxic. By participating for instance to the clearance of (E)-4-hydroxynon-2-enal/HNE in the lens epithelium prevents the formation of HNE-protein adducts and lens opacification. Also functions downstream of fructosamine-3-kinase in the fructosamine degradation pathway by catalyzing the oxidation of 3-deoxyglucosone, the carbohydrate product of fructosamine 3-phosphate decomposition, which is itself a potent glycating agent that may react with lysine and arginine side-chains of proteins. Also has an aminobutyraldehyde dehydrogenase activity and is probably part of an alternative pathway for the biosynthesis of GABA/4-aminobutanoate in midbrain, thereby playing a role in GABAergic synaptic transmission. The polypeptide is Aldehyde dehydrogenase 1A1 (Mus musculus (Mouse)).